Consider the following 305-residue polypeptide: Type II secretion system protein C (305 aa).

Residues 1–29 (MEFKQLPPLAAWPRLLSQNTLRWQKPISE) lie on the Cytoplasmic side of the membrane. A helical membrane pass occupies residues 30–50 (GLTLLLLVASAWTLGKMVWVV). The Periplasmic segment spans residues 51 to 305 (SAEQTPVPTW…GQQHDVYIQF (255 aa)).

The protein belongs to the GSP C family.

The protein resides in the cell inner membrane. In terms of biological role, involved in a type II secretion system (T2SS, formerly general secretion pathway, GSP) for the export of proteins. Required for secretion of cholera toxin through the outer membrane. This chain is Type II secretion system protein C (epsC), found in Vibrio cholerae serotype O1 (strain ATCC 39315 / El Tor Inaba N16961).